Reading from the N-terminus, the 182-residue chain is Large ribosomal subunit protein uL5 (182 aa).

As to quaternary structure, part of the 50S ribosomal subunit; part of the 5S rRNA/uL5/uL18/bL25 (TL7) subcomplex; has also been isolated as a complex with 5S rRNA, bL25 (TL7) and DNA binding protein II. Forms a bridge to the 30S subunit in the 70S ribosome, contacting protein uS13; this bridge is straddled by the 5S rRNA. Contacts the P site tRNA.

Functionally, this is one of the proteins that bind and probably mediate the attachment of the 5S RNA into the large ribosomal subunit, where it forms part of the central protuberance. In the 70S ribosome it contacts protein S13 of the 30S subunit (forming bridge B1b) connecting the head of the 30S subunit to the top of the 50S subunit. The bridge itself contacts the P site tRNA and is implicated in movement during ribosome translocation. Also contacts the P site tRNA independently of the intersubunit bridge; the 5S rRNA and some of its associated proteins might help stabilize positioning of ribosome-bound tRNAs. In Thermus thermophilus (strain ATCC 27634 / DSM 579 / HB8), this protein is Large ribosomal subunit protein uL5 (rplE).